Reading from the N-terminus, the 1136-residue chain is Receptor-type guanylate cyclase gcy-4 (1136 aa).

Positions 1–21 are cleaved as a signal peptide; that stretch reads MRQLNYYIFISTILTYNLTHG. The Extracellular segment spans residues 22–485; the sequence is QGPRPVIRVG…CPLPIFEQYR (464 aa). Residues Asn40, Asn194, Asn252, Asn351, Asn377, Asn386, and Asn438 are each glycosylated (N-linked (GlcNAc...) asparagine). Residues 486–506 traverse the membrane as a helical segment; it reads ALVIVAIAVTILILLAIIICM. Topologically, residues 507-1136 are cytoplasmic; it reads SSKIRNRRVE…LRREMMRVEV (630 aa). Residues 533-833 form the Protein kinase domain; sequence LPMHRRASKS…EDNLMDHVFS (301 aa). Residues 536–565 form a disordered region; it reads HRRASKSSQESETESASETENFTSKSGDTM. Positions 891–1021 constitute a Guanylate cyclase domain; the sequence is TVFFSDLVKF…DTVNTASRME (131 aa).

It belongs to the adenylyl cyclase class-4/guanylyl cyclase family. Expression is biased toward ASE right (ASER) sensory neuron.

It localises to the cell membrane. The enzyme catalyses GTP = 3',5'-cyclic GMP + diphosphate. Guanylate cyclase involved in the production of the second messenger cGMP. Regulates chemotaxis responses toward Br(1-) and I(1-) salt ions in ASE right (ASER) sensory neuron. This chain is Receptor-type guanylate cyclase gcy-4, found in Caenorhabditis elegans.